The following is a 391-amino-acid chain: Ferrochelatase (391 aa).

Fe cation is bound by residues His196 and Glu281.

Belongs to the ferrochelatase family.

The protein resides in the cytoplasm. It carries out the reaction heme b + 2 H(+) = protoporphyrin IX + Fe(2+). The protein operates within porphyrin-containing compound metabolism; protoheme biosynthesis; protoheme from protoporphyrin-IX: step 1/1. Functionally, catalyzes the ferrous insertion into protoporphyrin IX. This Prochlorococcus marinus subsp. pastoris (strain CCMP1986 / NIES-2087 / MED4) protein is Ferrochelatase.